A 256-amino-acid polypeptide reads, in one-letter code: Hemin import ATP-binding protein HmuV (256 aa).

The 237-residue stretch at 2-238 (ISAQNLVYSL…QELTMLYGAD (237 aa)) folds into the ABC transporter domain. Position 34–41 (34–41 (GPNGAGKS)) interacts with ATP.

This sequence belongs to the ABC transporter superfamily. Heme (hemin) importer (TC 3.A.1.14.5) family. In terms of assembly, the complex is composed of two ATP-binding proteins (HmuV), two transmembrane proteins (HmuU) and a solute-binding protein (HmuT).

It is found in the cell inner membrane. In terms of biological role, part of the ABC transporter complex HmuTUV involved in hemin import. Responsible for energy coupling to the transport system. This chain is Hemin import ATP-binding protein HmuV, found in Shigella dysenteriae.